A 143-amino-acid chain; its full sequence is Large ribosomal subunit protein uL11 (143 aa).

It belongs to the universal ribosomal protein uL11 family. In terms of assembly, part of the ribosomal stalk of the 50S ribosomal subunit. Interacts with L10 and the large rRNA to form the base of the stalk. L10 forms an elongated spine to which L12 dimers bind in a sequential fashion forming a multimeric L10(L12)X complex. One or more lysine residues are methylated.

Its function is as follows. Forms part of the ribosomal stalk which helps the ribosome interact with GTP-bound translation factors. The polypeptide is Large ribosomal subunit protein uL11 (Bordetella parapertussis (strain 12822 / ATCC BAA-587 / NCTC 13253)).